The sequence spans 71 residues: Protein translocase subunit SecE (71 aa).

Residues 43-63 (VAGAGILAVGAIGFIIYVLLT) form a helical membrane-spanning segment.

It belongs to the SecE/SEC61-gamma family. In terms of assembly, component of the Sec protein translocase complex. Heterotrimer consisting of SecY (alpha), SecG (beta) and SecE (gamma) subunits. The heterotrimers can form oligomers, although 1 heterotrimer is thought to be able to translocate proteins. Interacts with the ribosome. May interact with SecDF, and other proteins may be involved.

It is found in the cell membrane. Its function is as follows. Essential subunit of the Sec protein translocation channel SecYEG. Clamps together the 2 halves of SecY. May contact the channel plug during translocation. This chain is Protein translocase subunit SecE, found in Methanosarcina acetivorans (strain ATCC 35395 / DSM 2834 / JCM 12185 / C2A).